The following is a 561-amino-acid chain: Glutamate--tRNA ligase (561 aa).

The 'HIGH' region signature appears at 107 to 117; the sequence is PNPSGPLHLGH.

This sequence belongs to the class-I aminoacyl-tRNA synthetase family. Glutamate--tRNA ligase type 2 subfamily.

The protein localises to the cytoplasm. It catalyses the reaction tRNA(Glu) + L-glutamate + ATP = L-glutamyl-tRNA(Glu) + AMP + diphosphate. Its function is as follows. Catalyzes the attachment of glutamate to tRNA(Glu) in a two-step reaction: glutamate is first activated by ATP to form Glu-AMP and then transferred to the acceptor end of tRNA(Glu). The protein is Glutamate--tRNA ligase of Methanospirillum hungatei JF-1 (strain ATCC 27890 / DSM 864 / NBRC 100397 / JF-1).